Reading from the N-terminus, the 433-residue chain is Myricetin 3-O-glucosyl 1,2-rhamnoside 6'-O-caffeoyltransferase AT2 (433 aa).

Active-site proton acceptor residues include His-157 and Asp-375.

The protein belongs to the plant acyltransferase family. Expressed in young cromes.

The catalysed reaction is myricetin 3-O-[beta-D-glucosyl-(1-&gt;2)-alpha-L-rhamnoside] + (E)-caffeoyl-CoA = myricetin 3-O-[(6-O-(E)-caffeoyl-beta-D-glucosyl)-(1-&gt;2)-alpha-L-rhamnoside] + CoA. It participates in flavonoid metabolism. Functionally, caffeoyltransferase involved in montbretin A (MbA) biosynthesis. Catalyzes the caffeoylation of myricetin 3-O-beta-D-glucosyl 1,2-alpha-L-rhamnoside (MRG) to produce myricetin 3-O-(6'-O-caffeoyl)-beta-D-glucosyl 1,2-alpha-L-rhamnoside (mini-MbA), a precursor of MbA. Mini-MbA and MbA are potent inhibitors of human pancreatic alpha-amylase and are being developed as drug candidates to treat type-2 diabetes. In vitro, is able to catalyze the caffeoylation of quercetin 3-O-sophoroside (QGG), although QGG may not be a physiological substrate in vivo. In vitro, can use coumaryl-CoA, feruloyl-CoA and acetyl-CoA, although these three acyl donors may not be physiological in vivo. The protein is Myricetin 3-O-glucosyl 1,2-rhamnoside 6'-O-caffeoyltransferase AT2 of Crocosmia x crocosmiiflora (Montbretia).